Consider the following 196-residue polypeptide: Mediator of RNA polymerase II transcription subunit 21 (196 aa).

The tract at residues 52–111 is disordered; sequence KIPKNASTPPVPASAPQAAQSQSQASPPPPDTANPQTGGQHADQQQQSPDGEGLPAPDSP. Composition is skewed to low complexity over residues 65 to 76 and 87 to 98; these read SAPQAAQSQSQA and QTGGQHADQQQQ. Residues 144-174 are a coiled coil; that stretch reads SSEAEQERRIRELEGELRIVEGVREERRREL.

It belongs to the Mediator complex subunit 21 family. As to quaternary structure, component of the Mediator complex.

It is found in the nucleus. Component of the Mediator complex, a coactivator involved in the regulated transcription of nearly all RNA polymerase II-dependent genes. Mediator functions as a bridge to convey information from gene-specific regulatory proteins to the basal RNA polymerase II transcription machinery. Mediator is recruited to promoters by direct interactions with regulatory proteins and serves as a scaffold for the assembly of a functional preinitiation complex with RNA polymerase II and the general transcription factors. The sequence is that of Mediator of RNA polymerase II transcription subunit 21 (srb7) from Aspergillus niger (strain ATCC MYA-4892 / CBS 513.88 / FGSC A1513).